The chain runs to 183 residues: ATP synthase subunit b, chloroplastic (183 aa).

Residues 25–45 (DILATNLINLTVVVGVLIFFG) traverse the membrane as a helical segment.

It belongs to the ATPase B chain family. As to quaternary structure, F-type ATPases have 2 components, F(1) - the catalytic core - and F(0) - the membrane proton channel. F(1) has five subunits: alpha(3), beta(3), gamma(1), delta(1), epsilon(1). F(0) has four main subunits: a(1), b(1), b'(1) and c(10-14). The alpha and beta chains form an alternating ring which encloses part of the gamma chain. F(1) is attached to F(0) by a central stalk formed by the gamma and epsilon chains, while a peripheral stalk is formed by the delta, b and b' chains.

It is found in the plastid. The protein resides in the chloroplast thylakoid membrane. F(1)F(0) ATP synthase produces ATP from ADP in the presence of a proton or sodium gradient. F-type ATPases consist of two structural domains, F(1) containing the extramembraneous catalytic core and F(0) containing the membrane proton channel, linked together by a central stalk and a peripheral stalk. During catalysis, ATP synthesis in the catalytic domain of F(1) is coupled via a rotary mechanism of the central stalk subunits to proton translocation. Functionally, component of the F(0) channel, it forms part of the peripheral stalk, linking F(1) to F(0). This Zea mays (Maize) protein is ATP synthase subunit b, chloroplastic.